Consider the following 340-residue polypeptide: Organic solute transporter subunit alpha (340 aa).

The Extracellular portion of the chain corresponds to Met1–Ser52. The N-linked (GlcNAc...) asparagine glycan is linked to Asn25. The helical transmembrane segment at Leu53 to Val73 threads the bilayer. The Cytoplasmic segment spans residues Tyr74–Thr87. Residues Leu88–Ile108 form a helical membrane-spanning segment. Over Pro109–Arg110 the chain is Extracellular. Residues Ala111–Met131 traverse the membrane as a helical segment. Topologically, residues Gln132–Gln186 are cytoplasmic. A helical membrane pass occupies residues Tyr187 to Phe207. Topologically, residues Asp208–Leu219 are extracellular. The helical transmembrane segment at Trp220 to Phe240 threads the bilayer. The Cytoplasmic segment spans residues Arg241–Lys255. A helical transmembrane segment spans residues Phe256 to Leu276. The Extracellular portion of the chain corresponds to Ala277–Gln295. The helical transmembrane segment at Val296 to Tyr316 threads the bilayer. The Cytoplasmic portion of the chain corresponds to Tyr317–Ala340. Ser330 is modified (phosphoserine).

The protein belongs to the OST-alpha family. As to quaternary structure, interacts with SLC51B. The Ost-alpha/Ost-beta complex is a heterodimer composed of alpha (SLC51A) and beta (SLC51B) subunit.

It is found in the cell membrane. The protein resides in the endoplasmic reticulum membrane. It carries out the reaction taurocholate(out) = taurocholate(in). The enzyme catalyses estrone 3-sulfate(out) = estrone 3-sulfate(in). It catalyses the reaction dehydroepiandrosterone 3-sulfate(out) = dehydroepiandrosterone 3-sulfate(in). The catalysed reaction is tauroursodeoxycholate(out) = tauroursodeoxycholate(in). It carries out the reaction glycoursodeoxycholate(out) = glycoursodeoxycholate(in). The enzyme catalyses glycocholate(out) = glycocholate(in). It catalyses the reaction taurochenodeoxycholate(out) = taurochenodeoxycholate(in). The catalysed reaction is glycochenodeoxycholate(out) = glycochenodeoxycholate(in). It carries out the reaction taurodeoxycholate(out) = taurodeoxycholate(in). The enzyme catalyses glycodeoxycholate(out) = glycodeoxycholate(in). It catalyses the reaction prostaglandin E2(out) = prostaglandin E2(in). Its function is as follows. Essential component of the Ost-alpha/Ost-beta complex, a heterodimer that acts as the intestinal basolateral transporter responsible for bile acid export from enterocytes into portal blood. Efficiently transports the major species of bile acids (taurocholate). Taurine conjugates are transported more efficiently across the basolateral membrane than glycine-conjugated bile acids. Can also transport steroids such as estrone 3-sulfate and dehydroepiandrosterone 3-sulfate, therefore playing a role in the enterohepatic circulation of sterols. Able to transport eicosanoids such as prostaglandin E2. This is Organic solute transporter subunit alpha (SLC51A) from Bos taurus (Bovine).